The sequence spans 453 residues: Protein FAM117A (453 aa).

Residues 1-25 are compositionally biased toward gly residues; that stretch reads MAGAAAGGRGGGAWGPGRGGAGGLR. Positions 1–45 are disordered; that stretch reads MAGAAAGGRGGGAWGPGRGGAGGLRRGCSPPAPAGSPRAGLQPLR. Residues serine 29 and serine 67 each carry the phosphoserine modification. Residues 149–175 are a coiled coil; it reads TDHRKEISKLKQQLQRTKLSRSGKEKE. Positions 159–201 are disordered; sequence KQQLQRTKLSRSGKEKERGSPLLGDHAVRGALRASPPSFPSGS. Residues serine 178, serine 193, serine 201, and serine 213 each carry the phosphoserine modification. Residues 269 to 278 show a composition bias toward low complexity; the sequence is SSPSMSLASP. Residues 269 to 320 are disordered; that stretch reads SSPSMSLASPQPCGLASHEEHRGAAEELASTPNDKASSPGHPAFLEDGSPSP. Residue threonine 299 is modified to Phosphothreonine. A phosphoserine mark is found at serine 319 and serine 327. Threonine 354 is subject to Phosphothreonine. Over residues 406 to 416 the composition is skewed to pro residues; the sequence is GSPLPPASPRP. The tract at residues 406 to 453 is disordered; sequence GSPLPPASPRPPPRKDPEASKASPLPFEPWQRTPPSEEPVLFQSSLMV. 2 positions are modified to phosphoserine: serine 413 and serine 428.

The protein belongs to the FAM117 family.

This is Protein FAM117A (FAM117A) from Homo sapiens (Human).